Here is a 33-residue protein sequence, read N- to C-terminus: Imperacalcin (33 aa).

3 cysteine pairs are disulfide-bonded: cysteine 3/cysteine 17, cysteine 10/cysteine 21, and cysteine 16/cysteine 32. 2 important for stimulation of [3H]ryanodine binding to RYR1 regions span residues 8–9 (KR) and 19–20 (KK). The interval 22 to 24 (KRR) is essential for stimulation of [3H]ryanodine binding to RYR1. The segment at 25-27 (GTN) is important for stimulation of [3H]ryanodine binding to RYR1.

The protein belongs to the scorpion calcin family. In terms of tissue distribution, expressed by the venom gland.

It localises to the secreted. Its function is as follows. This toxin affects the activity of ryanodine receptors 1, 2 and 3 (RyR1, RyR2 and RyR3). At lower concentrations the toxin increases full openings of the RyRs, and at higher concentrations it inhibits full openings and induces openings to subconductance levels (30% of the full conductance state) and reduces the number of full conductance openings. The different actions may be attributed to the toxins binding at different sites on the RyRs, with binding at a high-affinity site mediating the increase in full openings and the induction of subconductance states evoked upon binding to a lower-affinity site. Furthermore, it triggers calcium release from sarcoplasmic vesicles (11.7 nM are enough to induce a sharp release, and 70% of the total calcium is released after toxin (100 nM) addition) probably by acting as a cell-penetrating peptide (CPP). In addition, it has been shown to dose-dependently stimulate ryanodine binding to RyR1 (EC(50)=8.7 nM). It also augments the bell-shaped calcium-[3H]ryanodine binding curve that is maximal at about 10 uM calcium concentration. It binds a different site as ryanodine. It acts synergistically with caffeine. In vivo, intracerebroventricular injection into mice induces neurotoxic symptoms, followed by death. The protein is Imperacalcin of Pandinus imperator (Emperor scorpion).